Reading from the N-terminus, the 824-residue chain is Type IV secretion system protein PtlC homolog (824 aa).

Residue 456–463 (GQSGSGKT) participates in ATP binding.

Belongs to the TrbE/VirB4 family.

The protein localises to the cell membrane. This chain is Type IV secretion system protein PtlC homolog (ptlC), found in Bordetella bronchiseptica (strain ATCC BAA-588 / NCTC 13252 / RB50) (Alcaligenes bronchisepticus).